A 483-amino-acid polypeptide reads, in one-letter code: SWI/SNF-related matrix-associated actin-dependent regulator of chromatin subfamily D member 3 (483 aa).

Residue Ala2 is modified to N-acetylalanine. The disordered stretch occupies residues 26 to 102 (VRPGMPSGAR…ARSRSAKRRK (77 aa)). Residues 78–87 (QSQAQSQGQP) are compositionally biased toward low complexity. Ser178 is modified (phosphoserine). In terms of domain architecture, SWIB/MDM2 spans 258–335 (YQPPQFKLDP…PQRLTALLLP (78 aa)).

This sequence belongs to the SMARCD family. Component of the multiprotein chromatin-remodeling complexes SWI/SNF: SWI/SNF-A (BAF), SWI/SNF-B (PBAF) and related complexes. The canonical complex contains a catalytic subunit (either SMARCA4/BRG1/BAF190A or SMARCA2/BRM/BAF190B) and at least SMARCE1, ACTL6A/BAF53, SMARCC1/BAF155, SMARCC2/BAF170, and SMARCB1/SNF5/BAF47. Other subunits specific to each of the complexes may also be present permitting several possible combinations developmentally and tissue specific. Component of the BAF complex, which includes at least actin (ACTB), ARID1A/BAF250A, ARID1B/BAF250B, SMARCA2/BRM, SMARCA4/BRG1/BAF190A, ACTL6A/BAF53, ACTL6B/BAF53B, SMARCE1/BAF57, SMARCC1/BAF155, SMARCC2/BAF170, SMARCB1/SNF5/INI1, and one or more SMARCD1/BAF60A, SMARCD2/BAF60B, or SMARCD3/BAF60C. In muscle cells, the BAF complex also contains DPF3. Component of neural progenitors-specific chromatin remodeling complex (npBAF complex) composed of at least, ARID1A/BAF250A or ARID1B/BAF250B, SMARCD1/BAF60A, SMARCD3/BAF60C, SMARCA2/BRM/BAF190B, SMARCA4/BRG1/BAF190A, SMARCB1/BAF47, SMARCC1/BAF155, SMARCE1/BAF57, SMARCC2/BAF170, PHF10/BAF45A, ACTL6A/BAF53A and actin. Component of neuron-specific chromatin remodeling complex (nBAF complex) composed of at least, ARID1A/BAF250A or ARID1B/BAF250B, SMARCD1/BAF60A, SMARCD3/BAF60C, SMARCA2/BRM/BAF190B, SMARCA4/BRG1/BAF190A, SMARCB1/BAF47, SMARCC1/BAF155, SMARCE1/BAF57, SMARCC2/BAF170, DPF1/BAF45B, DPF3/BAF45C, ACTL6B/BAF53B and actin. May be a component of the SWI/SNF-B (PBAF) chromatin remodeling complex, at least composed of SMARCA4/BRG1, SMARCB1/BAF47/SNF5, ACTL6A/BAF53A or ACTL6B/BAF53B, SMARCE1/BAF57, SMARCD1/BAF60A, SMARCD2/BAF60B, perhaps SMARCD3/BAF60C, SMARCC1/BAF155, SMARCC2/BAF170, PBRM1/BAF180, ARID2/BAF200 and actin. Interacts with SMARCA4/BRG1/BAF190A. Component of SWI/SNF (GBAF) subcomplex, which includes at least BICRA or BICRAL (mutually exclusive), BRD9, SS18, SMARCA2/BRM, SMARCA4/BRG1/BAF190A, ACTL6A/BAF53, SMARCC1/BAF155, and SMARCD1/BAF60A. The precise distribution of the related SMARCD1, SMARCD2 and SMARCD3 proteins among these and other SWI/SNF nucleosome-remodeling complexes is not fully known. May allow recruitment of SWI/SNF containing complexes specifically to promoters where these factors are located. Also interacts with several nuclear receptors including PPARG/NR1C3, RXRA/NR1F1, ESR1, NR5A1, NR5A2/LRH1 and other transcriptional activators including the HLH protein SREBF1/SREBP1 and the homeobox protein PBX1. Interacts with PRDM1/BLIMP1. As to expression, isoform 2 and isoform 1 are expressed in brain, heart, kidney, placenta, prostate, salivary gland, spleen, testis, thyroid, trachea and uterus. Isoform 1 is also expressed in skeletal muscle and adipose tissue.

It is found in the nucleus. In terms of biological role, involved in transcriptional activation and repression of select genes by chromatin remodeling (alteration of DNA-nucleosome topology). Component of SWI/SNF chromatin remodeling complexes that carry out key enzymatic activities, changing chromatin structure by altering DNA-histone contacts within a nucleosome in an ATP-dependent manner. Stimulates nuclear receptor mediated transcription. Belongs to the neural progenitors-specific chromatin remodeling complex (npBAF complex) and the neuron-specific chromatin remodeling complex (nBAF complex). During neural development a switch from a stem/progenitor to a postmitotic chromatin remodeling mechanism occurs as neurons exit the cell cycle and become committed to their adult state. The transition from proliferating neural stem/progenitor cells to postmitotic neurons requires a switch in subunit composition of the npBAF and nBAF complexes. As neural progenitors exit mitosis and differentiate into neurons, npBAF complexes which contain ACTL6A/BAF53A and PHF10/BAF45A, are exchanged for homologous alternative ACTL6B/BAF53B and DPF1/BAF45B or DPF3/BAF45C subunits in neuron-specific complexes (nBAF). The npBAF complex is essential for the self-renewal/proliferative capacity of the multipotent neural stem cells. The nBAF complex along with CREST plays a role regulating the activity of genes essential for dendrite growth. This chain is SWI/SNF-related matrix-associated actin-dependent regulator of chromatin subfamily D member 3 (SMARCD3), found in Homo sapiens (Human).